A 66-amino-acid chain; its full sequence is Conotoxin Cl14.1b (66 aa).

The signal sequence occupies residues 1–19; the sequence is MNVTVMFLVLLLTMPLTDG. Residues 20–47 constitute a propeptide that is removed on maturation; it reads FNIRAINGGELFGLVQRDAGNALDHGFY.

This sequence belongs to the conotoxin L superfamily. Contains 2 disulfide bonds. Expressed by the venom duct.

Its subcellular location is the secreted. The protein is Conotoxin Cl14.1b of Californiconus californicus (California cone).